The chain runs to 215 residues: MSLPPVIAIDGPTASGKGTVASLVAEKLGFHYLDSGALYRLVALASEKQGIDVKNGQELGLLVPKLLISFKNSQIFLNGENVTDAIRVESIGLRASALAVHPEIRSALVGLQRSFRQSPGLVADGRDTASVIFPDAILKVFLTATAAARAGRRYKQLIAKGISAKLEDLLQDLQERDARDSSRGVAPLLVADGAKVLETSDLSIDQAVKTVLDWY.

Position 11 to 19 (11 to 19) interacts with ATP; the sequence is GPTASGKGT.

Belongs to the cytidylate kinase family. Type 1 subfamily.

It is found in the cytoplasm. The catalysed reaction is CMP + ATP = CDP + ADP. It catalyses the reaction dCMP + ATP = dCDP + ADP. This chain is Cytidylate kinase, found in Polynucleobacter necessarius subsp. necessarius (strain STIR1).